The chain runs to 475 residues: Probable proline--tRNA ligase, mitochondrial (475 aa).

Residues 1-29 (MEGLLTRCRTLSALAACSLRHCRYIIHKC) constitute a mitochondrion transit peptide.

This sequence belongs to the class-II aminoacyl-tRNA synthetase family.

Its subcellular location is the mitochondrion matrix. The enzyme catalyses tRNA(Pro) + L-proline + ATP = L-prolyl-tRNA(Pro) + AMP + diphosphate. Mitochondrial aminoacyl-tRNA synthetase that catalyzes the specific attachment of the proline amino acid (aa) to the homologous transfer RNA (tRNA), further participating in protein synthesis. The reaction occurs in a two steps: proline is first activated by ATP to form Pro-AMP and then transferred to the acceptor end of tRNA(Pro). The polypeptide is Probable proline--tRNA ligase, mitochondrial (Pars2) (Mus musculus (Mouse)).